A 459-amino-acid chain; its full sequence is UDP-N-acetylmuramate--L-alanine ligase (459 aa).

ATP is bound at residue 118 to 124 (GTHGKTT).

The protein belongs to the MurCDEF family.

The protein resides in the cytoplasm. The catalysed reaction is UDP-N-acetyl-alpha-D-muramate + L-alanine + ATP = UDP-N-acetyl-alpha-D-muramoyl-L-alanine + ADP + phosphate + H(+). Its pathway is cell wall biogenesis; peptidoglycan biosynthesis. Cell wall formation. The sequence is that of UDP-N-acetylmuramate--L-alanine ligase from Agathobacter rectalis (strain ATCC 33656 / DSM 3377 / JCM 17463 / KCTC 5835 / VPI 0990) (Eubacterium rectale).